The primary structure comprises 179 residues: Pyridoxal 5'-phosphate synthase subunit PdxT (179 aa).

Residue 48 to 50 (GES) participates in L-glutamine binding. C79 acts as the Nucleophile in catalysis. L-glutamine-binding positions include R101 and 127-128 (IR). Catalysis depends on charge relay system residues H163 and E165.

It belongs to the glutaminase PdxT/SNO family. In terms of assembly, in the presence of PdxS, forms a dodecamer of heterodimers. Only shows activity in the heterodimer.

It catalyses the reaction aldehydo-D-ribose 5-phosphate + D-glyceraldehyde 3-phosphate + L-glutamine = pyridoxal 5'-phosphate + L-glutamate + phosphate + 3 H2O + H(+). The enzyme catalyses L-glutamine + H2O = L-glutamate + NH4(+). Its pathway is cofactor biosynthesis; pyridoxal 5'-phosphate biosynthesis. In terms of biological role, catalyzes the hydrolysis of glutamine to glutamate and ammonia as part of the biosynthesis of pyridoxal 5'-phosphate. The resulting ammonia molecule is channeled to the active site of PdxS. The sequence is that of Pyridoxal 5'-phosphate synthase subunit PdxT from Francisella philomiragia subsp. philomiragia (strain ATCC 25017 / CCUG 19701 / FSC 153 / O#319-036).